The sequence spans 153 residues: Putative tRNA (cytidine(34)-2'-O)-methyltransferase (153 aa).

Positions 102, 122, and 131 each coordinate S-adenosyl-L-methionine.

The protein belongs to the class IV-like SAM-binding methyltransferase superfamily. RNA methyltransferase TrmH family. TrmL subfamily.

It is found in the cytoplasm. It catalyses the reaction cytidine(34) in tRNA + S-adenosyl-L-methionine = 2'-O-methylcytidine(34) in tRNA + S-adenosyl-L-homocysteine + H(+). The enzyme catalyses 5-carboxymethylaminomethyluridine(34) in tRNA(Leu) + S-adenosyl-L-methionine = 5-carboxymethylaminomethyl-2'-O-methyluridine(34) in tRNA(Leu) + S-adenosyl-L-homocysteine + H(+). Its function is as follows. Could methylate the ribose at the nucleotide 34 wobble position in tRNA. This Synechocystis sp. (strain ATCC 27184 / PCC 6803 / Kazusa) protein is Putative tRNA (cytidine(34)-2'-O)-methyltransferase.